The sequence spans 1021 residues: MELVVGASEATMKSLLGKLGNLLAQEYALISGIRGDIQYINDELASMQAFLRDLSNVPEGHSHGHRMKDWMKQIRDIAYDVEDCIDDFAHRLPQDSISDAKWSFLLTKIYELWTWWPRRVIASNIAQLKVRAQQIADRRSRYGVNNPEHLDSSSSARTRAVNYEIAEYQVTSPQIIGIKEPVGMKTVMEELEVWLTNPQAENGQAVLSIVGFGGVGKTTIATALYRKVSEKFQCRASVAVSQNYDQGKVLNSILSQVSNQEQGSSTTISEKKNLTSGAKSMLKTALSLLRGNCICQPENDGNPDNTPIRLQETTDDDQNPRKLEQLLAEKSYILLIDDIWSAETWESIRSILPKNNKGGRIIVTTRFQAVGSTCSPLETDRLHTVDFLTDDESQNLFNTSICESKIRKDSNKVDEQVPEEIWKICGGLPLAIVSMAGLVACNPRKACCDWSKLCKSLFPEQETPLTLDGVTRILDCCYNDLPADLKTCLLYLSIFPKGWKISRKRLSRRWIAEGFANEKQGLTQERVAEAYFNQLTRRNLVRPMEHGSNGKVKTFQVHDMVLEYIMSKSIEENFITVVGGHWQMTAPSNKVRRLSMQSSGSNRGSSTKGLNLAQVRSLTVFGNLNHVPFHSFNYGIIQVLDLEDWKGLKERHMTEICQMLLLKYLSIRRTEISKIPSKIQKLEYLETLDIRETYVRDLPKSIVQLKRIISILGGNKNTRKGLRLPQEKSKKPIKNPSPQGKTKEPAKKGFLSQEKGKGAMKALRVLSGIEIVEESSEVAAGLHQLTGLRKLAIYKLNITKGGDTFKQLQSSIEYLGSCGLQTLAINDENSEFINSLGDMPAPPRYLVALELSGKLEKLPKWITSITTLNKLTISVTVLRTETLEILHILPSLFSLTFAFSLSAAKQDQDIIKDILENNKLDSDGEIVIPAEGFKSLKLLRFFAPLVPKLSFLDKNAMPALEIIEMRFKDFEGLFGIEILENLREVHLKVSDGAEAITKFLVNDLKVNTEKPKVFVDGIVTA.

The tract at residues 1–182 (MELVVGASEA…PQIIGIKEPV (182 aa)) is structured coiled coil (CC) domain. Positions 186-519 (TVMEELEVWL…WIAEGFANEK (334 aa)) constitute an NB-ARC domain. Positions 297–317 (PENDGNPDNTPIRLQETTDDD) are disordered. LRR repeat units lie at residues 612-634 (LAQV…SFNY), 659-682 (MLLL…IQKL), and 683-705 (EYLE…IVQL). Positions 719 to 751 (RKGLRLPQEKSKKPIKNPSPQGKTKEPAKKGFL) are disordered. LRR repeat units lie at residues 785–807 (LTGL…TFKQ), 817–841 (SCGL…DMPA), 843–865 (PRYL…ITSI), 866–888 (TTLN…ILHI), 912–935 (KDIL…GFKS), and 957–981 (MPAL…ILEN).

It belongs to the disease resistance NB-LRR family. As to expression, constitutively expressed.

Disease resistance (R) protein. Resistance proteins guard the plant against pathogens that contain an appropriate avirulence protein via an indirect interaction with this avirulence protein. That triggers a defense system including the hypersensitive response, which restricts the pathogen growth. Contribution of Pikm-1 is required to recognize the effector avirulence protein AVR-Pik. This chain is Disease resistance protein Pikm2-TS, found in Oryza sativa subsp. japonica (Rice).